Consider the following 431-residue polypeptide: Serine--tRNA ligase (431 aa).

238–240 (TSE) provides a ligand contact to L-serine. 269–271 (RSE) serves as a coordination point for ATP. An L-serine-binding site is contributed by Glu-292. 356-359 (EISS) contributes to the ATP binding site. Ser-391 serves as a coordination point for L-serine.

This sequence belongs to the class-II aminoacyl-tRNA synthetase family. Type-1 seryl-tRNA synthetase subfamily. Homodimer. The tRNA molecule binds across the dimer.

Its subcellular location is the cytoplasm. The enzyme catalyses tRNA(Ser) + L-serine + ATP = L-seryl-tRNA(Ser) + AMP + diphosphate + H(+). It catalyses the reaction tRNA(Sec) + L-serine + ATP = L-seryl-tRNA(Sec) + AMP + diphosphate + H(+). It participates in aminoacyl-tRNA biosynthesis; selenocysteinyl-tRNA(Sec) biosynthesis; L-seryl-tRNA(Sec) from L-serine and tRNA(Sec): step 1/1. Functionally, catalyzes the attachment of serine to tRNA(Ser). Is also able to aminoacylate tRNA(Sec) with serine, to form the misacylated tRNA L-seryl-tRNA(Sec), which will be further converted into selenocysteinyl-tRNA(Sec). The sequence is that of Serine--tRNA ligase from Leptothrix cholodnii (strain ATCC 51168 / LMG 8142 / SP-6) (Leptothrix discophora (strain SP-6)).